A 380-amino-acid polypeptide reads, in one-letter code: UDP-N-acetylglucosamine 2-epimerase (380 aa).

This sequence belongs to the UDP-N-acetylglucosamine 2-epimerase family.

The protein localises to the cytoplasm. It catalyses the reaction UDP-N-acetyl-alpha-D-glucosamine = UDP-N-acetyl-alpha-D-mannosamine. Its pathway is cell wall biogenesis; poly(glycerol phosphate) teichoic acid biosynthesis. Catalyzes the conversion of UDP-N-acetylglucosamine into UDP-N-acetylmannosamine, a precursor of the teichoic acid linkage unit. This chain is UDP-N-acetylglucosamine 2-epimerase (mnaA), found in Bacillus subtilis (strain 168).